The sequence spans 389 residues: F-box protein At3g19880 (389 aa).

One can recognise an F-box domain in the interval 2 to 49 (TMMSDLTQDLVEEILSRVPITSLGAVRSTCKGWNALSKERILCIGEPK).

The polypeptide is F-box protein At3g19880 (Arabidopsis thaliana (Mouse-ear cress)).